A 199-amino-acid chain; its full sequence is CASP-like protein 4B1 (199 aa).

Residues 1–32 are disordered; it reads MAMVASPDDIVKSPLPPPPPPPPPPLPPAHKD. Over 1 to 53 the chain is Cytoplasmic; it reads MAMVASPDDIVKSPLPPPPPPPPPPLPPAHKDKAAYNPYSGCPAHGGDDGLDG. A compositionally biased stretch (pro residues) spans 14–28; that stretch reads PLPPPPPPPPPPLPP. The chain crosses the membrane as a helical span at residues 54–74; that stretch reads IVLVLRAAAALLALVAMALVA. Residues 75–91 are Extracellular-facing; the sequence is SCRHGDWMEFTRYQEYR. Residues 92 to 112 traverse the membrane as a helical segment; it reads YLLGVAVVASLYSALQAARTF. At 113–127 the chain is on the cytoplasmic side; the sequence is RRMRAGTAYAATFLD. A helical membrane pass occupies residues 128 to 148; the sequence is FAGDQAVGYLLITASSAALPI. Topologically, residues 149-163 are extracellular; the sequence is TIRMRSAVVNTFTDV. Residues 164-184 traverse the membrane as a helical segment; the sequence is VAASISFAFLAFAALAFSALI. At 185–199 the chain is on the cytoplasmic side; it reads AGFRLSSSSSSAYNY.

It belongs to the Casparian strip membrane proteins (CASP) family. In terms of assembly, homodimer and heterodimers.

The protein resides in the cell membrane. In Oryza sativa subsp. japonica (Rice), this protein is CASP-like protein 4B1.